Here is a 1073-residue protein sequence, read N- to C-terminus: Lon protease homolog, mitochondrial (1073 aa).

The transit peptide at 1 to 27 (MIKASKCNKARALFLVRTSIPRTFIRN) directs the protein to the mitochondrion. 2 stretches are compositionally biased toward basic and acidic residues: residues 69-107 (FDSK…RKDI) and 113-123 (YDIKEETDSKP). The disordered stretch occupies residues 69–173 (FDSKKEKQPS…DKEFLSPSDA (105 aa)). A compositionally biased stretch (low complexity) spans 132 to 150 (SSKSSISSSSGGANNNNNN). The span at 158–167 (DDGSPKDKEF) shows a compositional bias: basic and acidic residues. The 219-residue stretch at 177–395 (PPFLAIAMKD…LSLQLLQVEA (219 aa)) folds into the Lon N-terminal domain. 543-550 (GPPGTGKT) is a binding site for ATP. Basic and acidic residues predominate over residues 775 to 785 (SVISDKAKKDA). The tract at residues 775 to 821 (SVISDKAKKDAGSSSIESNDSNTEAKVSTTTENEKKQEQKQKQDEEI) is disordered. The span at 790–805 (IESNDSNTEAKVSTTT) shows a compositional bias: polar residues. Over residues 806-821 (ENEKKQEQKQKQDEEI) the composition is skewed to basic and acidic residues. Residues 856–1044 (TLNPGVATGL…SEVFEHLFKG (189 aa)) form the Lon proteolytic domain. Residues serine 950 and lysine 993 contribute to the active site.

Belongs to the peptidase S16 family. In terms of assembly, homohexamer or homoheptamer. Organized in a ring with a central cavity.

Its subcellular location is the mitochondrion matrix. It carries out the reaction Hydrolysis of proteins in presence of ATP.. Its function is as follows. ATP-dependent serine protease that mediates the selective degradation of misfolded, unassembled or oxidatively damaged polypeptides as well as certain short-lived regulatory proteins in the mitochondrial matrix. May also have a chaperone function in the assembly of inner membrane protein complexes. Participates in the regulation of mitochondrial gene expression and in the maintenance of the integrity of the mitochondrial genome. Binds to mitochondrial DNA in a site-specific manner. The sequence is that of Lon protease homolog, mitochondrial from Candida dubliniensis (strain CD36 / ATCC MYA-646 / CBS 7987 / NCPF 3949 / NRRL Y-17841) (Yeast).